Here is a 93-residue protein sequence, read N- to C-terminus: Pyrimidine/purine nucleoside phosphorylase (93 aa).

Belongs to the nucleoside phosphorylase PpnP family.

It carries out the reaction a purine D-ribonucleoside + phosphate = a purine nucleobase + alpha-D-ribose 1-phosphate. It catalyses the reaction adenosine + phosphate = alpha-D-ribose 1-phosphate + adenine. The enzyme catalyses cytidine + phosphate = cytosine + alpha-D-ribose 1-phosphate. The catalysed reaction is guanosine + phosphate = alpha-D-ribose 1-phosphate + guanine. It carries out the reaction inosine + phosphate = alpha-D-ribose 1-phosphate + hypoxanthine. It catalyses the reaction thymidine + phosphate = 2-deoxy-alpha-D-ribose 1-phosphate + thymine. The enzyme catalyses uridine + phosphate = alpha-D-ribose 1-phosphate + uracil. The catalysed reaction is xanthosine + phosphate = alpha-D-ribose 1-phosphate + xanthine. In terms of biological role, catalyzes the phosphorolysis of diverse nucleosides, yielding D-ribose 1-phosphate and the respective free bases. Can use uridine, adenosine, guanosine, cytidine, thymidine, inosine and xanthosine as substrates. Also catalyzes the reverse reactions. The polypeptide is Pyrimidine/purine nucleoside phosphorylase (Pseudomonas syringae pv. tomato (strain ATCC BAA-871 / DC3000)).